The primary structure comprises 233 residues: Outer membrane protein MIP (233 aa).

Residues 1–20 form the signal peptide; it reads MKMKLVTAAVMGLAMSTAMA. A PPIase FKBP-type domain is found at 144–233; the sequence is SDTVTVEYTG…IHLISVKKSS (90 aa).

Belongs to the FKBP-type PPIase family.

The protein localises to the cell outer membrane. The enzyme catalyses [protein]-peptidylproline (omega=180) = [protein]-peptidylproline (omega=0). Strongly inhibited by FK506 but is completely resistant to cyclosporin A. Functionally, essential virulence factor associated with macrophage infectivity. Exhibits PPIase activity. This chain is Outer membrane protein MIP (mip), found in Legionella pneumophila subsp. pneumophila (strain Philadelphia 1 / ATCC 33152 / DSM 7513).